The chain runs to 71 residues: MRVLFFVFGVLSLMFTVPPARSFISNDECPSEYYYHCRLKCNADEHAIRYCADFSICCKLKIIEIHGQKKW.

A signal peptide spans 1 to 22 (MRVLFFVFGVLSLMFTVPPARS). Disulfide bonds link cysteine 29–cysteine 57, cysteine 37–cysteine 51, and cysteine 41–cysteine 58.

The protein belongs to the beta-defensin family.

It localises to the secreted. In terms of biological role, has antibacterial activity. Upon stimulation with lipoteichoic acid, promotes cytokines and chemokines production and secretion. This Pan troglodytes (Chimpanzee) protein is Beta-defensin 131A.